Reading from the N-terminus, the 656-residue chain is Ankyrin repeat and SAM domain-containing protein 3 (656 aa).

An interaction with NEK7 region spans residues 1 to 422; sequence MSELSDEASE…AESSPQTQRA (422 aa). A phosphoserine mark is found at S2 and S5. 6 ANK repeats span residues 34-64, 68-97, 101-130, 134-163, 168-197, and 201-220; these read DVPL…DLNK, GGWT…SVNV, EGQT…ELEM, QGWT…NANV, CGFT…KVDA, and SGAT…IVAL. Residue N96 is modified to 3-hydroxyasparagine. S201, S225, S243, S244, and S245 each carry phosphoserine. Disordered stretches follow at residues 235 to 265 and 277 to 312; these read SPEK…GVSI and GIGL…EEEG. T319 is modified (phosphothreonine). 4 positions are modified to phosphoserine: S320, S368, S371, and S375. Residues 346 to 425 form a disordered region; the sequence is GPVQSSSSSE…SPQTQRAPYS (80 aa). The region spanning 425–488 is the SAM domain; sequence SGPQDLAALL…TSAIARWHSS (64 aa). The stretch at 501 to 526 forms a coiled coil; sequence ADRLEAEMQELAIQLHKRCEEVEATR. Position 541 is a phosphoserine (S541).

In terms of assembly, homooligomer. Interacts (via SAM domain) with ANKS6 (via SAM domain). Interacts with BICC1. Interacts with NPHP1. Interacts with NEK8. Interacts with HIF1AN. Interacts with NEK7; this interaction alters the subcellular distribution of NEK7 by preventing its nuclear translocation. Hydroxylated at Asn-96, most probably by HIF1AN. Post-translationally, phosphorylations at Ser-5, Ser-225, Thr-319, Ser-320, Ser-368 and Ser-371 occur in a NEK7-dependent manner. In terms of processing, polyubiquitinated.

It is found in the cell projection. The protein resides in the cilium. The protein localises to the cytoplasm. Its function is as follows. May be involved in vasopressin signaling in the kidney. This Homo sapiens (Human) protein is Ankyrin repeat and SAM domain-containing protein 3 (ANKS3).